The sequence spans 159 residues: Serine-protein kinase RsbW (159 aa).

Belongs to the anti-sigma-factor family.

It carries out the reaction L-seryl-[protein] + ATP = O-phospho-L-seryl-[protein] + ADP + H(+). The enzyme catalyses L-threonyl-[protein] + ATP = O-phospho-L-threonyl-[protein] + ADP + H(+). Its function is as follows. Negative regulator of sigma-B activity. Phosphorylates and inactivates its specific antagonist protein, RsbV. Upon phosphorylation of RsbV, RsbW is released and binds to sigma-B, thereby blocking its ability to form an RNA polymerase holoenzyme (E-sigma-B). This is Serine-protein kinase RsbW from Staphylococcus aureus (strain MSSA476).